The following is a 376-amino-acid chain: Putative F-box protein At2g33200 (376 aa).

The region spanning 6 to 53 (YDWSKLCHDILRLILESLHYKDYHRARTVCSNWYTASTTCKRPLYPWR) is the F-box domain.

This is Putative F-box protein At2g33200 from Arabidopsis thaliana (Mouse-ear cress).